The chain runs to 112 residues: Cornifelin homolog (112 aa).

Belongs to the cornifelin family.

In Danio rerio (Zebrafish), this protein is Cornifelin homolog (cnfn).